A 672-amino-acid chain; its full sequence is tRNA 5-methylaminomethyl-2-thiouridine biosynthesis bifunctional protein MnmC (672 aa).

A tRNA (mnm(5)s(2)U34)-methyltransferase region spans residues Met1 to Pro241. Residues Ile271–Lys672 form an FAD-dependent cmnm(5)s(2)U34 oxidoreductase region.

In the N-terminal section; belongs to the methyltransferase superfamily. tRNA (mnm(5)s(2)U34)-methyltransferase family. This sequence in the C-terminal section; belongs to the DAO family. FAD serves as cofactor.

Its subcellular location is the cytoplasm. It catalyses the reaction 5-aminomethyl-2-thiouridine(34) in tRNA + S-adenosyl-L-methionine = 5-methylaminomethyl-2-thiouridine(34) in tRNA + S-adenosyl-L-homocysteine + H(+). Functionally, catalyzes the last two steps in the biosynthesis of 5-methylaminomethyl-2-thiouridine (mnm(5)s(2)U) at the wobble position (U34) in tRNA. Catalyzes the FAD-dependent demodification of cmnm(5)s(2)U34 to nm(5)s(2)U34, followed by the transfer of a methyl group from S-adenosyl-L-methionine to nm(5)s(2)U34, to form mnm(5)s(2)U34. In Mannheimia succiniciproducens (strain KCTC 0769BP / MBEL55E), this protein is tRNA 5-methylaminomethyl-2-thiouridine biosynthesis bifunctional protein MnmC.